Reading from the N-terminus, the 477-residue chain is Dihydrolipoyl dehydrogenase (477 aa).

FAD contacts are provided by residues 41–50 (EKRGALGGTC), Lys-59, Gly-124, and 153–155 (TGS). Residues Cys-50 and Cys-55 are joined by a disulfide bond. NAD(+) contacts are provided by residues 190-197 (GGGVIGLE), Glu-213, Val-248, and Gly-282. Residues Asp-323 and 330-333 (MLAH) contribute to the FAD site. The active-site Proton acceptor is the His-456.

It belongs to the class-I pyridine nucleotide-disulfide oxidoreductase family. In terms of assembly, homodimer. Requires FAD as cofactor.

It catalyses the reaction N(6)-[(R)-dihydrolipoyl]-L-lysyl-[protein] + NAD(+) = N(6)-[(R)-lipoyl]-L-lysyl-[protein] + NADH + H(+). The chain is Dihydrolipoyl dehydrogenase (LPD) from Trypanosoma cruzi.